The sequence spans 283 residues: Bifunctional protein FolD (283 aa).

Residues 165–167 and Ser-190 each bind NADP(+); that span reads GAS.

It belongs to the tetrahydrofolate dehydrogenase/cyclohydrolase family. As to quaternary structure, homodimer.

The catalysed reaction is (6R)-5,10-methylene-5,6,7,8-tetrahydrofolate + NADP(+) = (6R)-5,10-methenyltetrahydrofolate + NADPH. The enzyme catalyses (6R)-5,10-methenyltetrahydrofolate + H2O = (6R)-10-formyltetrahydrofolate + H(+). It participates in one-carbon metabolism; tetrahydrofolate interconversion. Its function is as follows. Catalyzes the oxidation of 5,10-methylenetetrahydrofolate to 5,10-methenyltetrahydrofolate and then the hydrolysis of 5,10-methenyltetrahydrofolate to 10-formyltetrahydrofolate. This Cupriavidus necator (strain ATCC 17699 / DSM 428 / KCTC 22496 / NCIMB 10442 / H16 / Stanier 337) (Ralstonia eutropha) protein is Bifunctional protein FolD.